The sequence spans 315 residues: DNA-directed RNA polymerase subunit alpha (315 aa).

The segment at 1 to 228 is alpha N-terminal domain (alpha-NTD); the sequence is MLEIEKPKIE…EHFKLFMTLT (228 aa). Residues 245 to 315 form an alpha C-terminal domain (alpha-CTD) region; that stretch reads KEKVLEMTIE…LELGLKQSEE (71 aa).

Belongs to the RNA polymerase alpha chain family. As to quaternary structure, homodimer. The RNAP catalytic core consists of 2 alpha, 1 beta, 1 beta' and 1 omega subunit. When a sigma factor is associated with the core the holoenzyme is formed, which can initiate transcription.

The catalysed reaction is RNA(n) + a ribonucleoside 5'-triphosphate = RNA(n+1) + diphosphate. Functionally, DNA-dependent RNA polymerase catalyzes the transcription of DNA into RNA using the four ribonucleoside triphosphates as substrates. The protein is DNA-directed RNA polymerase subunit alpha of Clostridium tetani (strain Massachusetts / E88).